We begin with the raw amino-acid sequence, 429 residues long: Adenylosuccinate synthetase (429 aa).

Residues 12-18 (GDEGKGK) and 40-42 (GHT) contribute to the GTP site. D13 (proton acceptor) is an active-site residue. Mg(2+) contacts are provided by D13 and G40. IMP is bound by residues 13 to 16 (DEGK), 38 to 41 (NAGH), T129, R143, Q224, T239, and R303. The Proton donor role is filled by H41. 299-305 (ATTGRKR) is a substrate binding site. Residues R305, 331–333 (KLD), and 413–415 (SVG) contribute to the GTP site.

The protein belongs to the adenylosuccinate synthetase family. Homodimer. Mg(2+) is required as a cofactor.

The protein resides in the cytoplasm. The catalysed reaction is IMP + L-aspartate + GTP = N(6)-(1,2-dicarboxyethyl)-AMP + GDP + phosphate + 2 H(+). It participates in purine metabolism; AMP biosynthesis via de novo pathway; AMP from IMP: step 1/2. In terms of biological role, plays an important role in the de novo pathway of purine nucleotide biosynthesis. Catalyzes the first committed step in the biosynthesis of AMP from IMP. The chain is Adenylosuccinate synthetase from Desulfosudis oleivorans (strain DSM 6200 / JCM 39069 / Hxd3) (Desulfococcus oleovorans).